Here is a 376-residue protein sequence, read N- to C-terminus: Queuine tRNA-ribosyltransferase (376 aa).

Asp-93 serves as the catalytic Proton acceptor. Residues 93–97 (DSGGF), Asp-147, Gln-190, and Gly-217 contribute to the substrate site. Residues 248–254 (GVGKPDD) form an RNA binding region. Asp-267 acts as the Nucleophile in catalysis. Zn(2+) contacts are provided by Cys-305, Cys-307, Cys-310, and His-336.

The protein belongs to the queuine tRNA-ribosyltransferase family. Homodimer. Within each dimer, one monomer is responsible for RNA recognition and catalysis, while the other monomer binds to the replacement base PreQ1. Zn(2+) serves as cofactor.

The catalysed reaction is 7-aminomethyl-7-carbaguanine + guanosine(34) in tRNA = 7-aminomethyl-7-carbaguanosine(34) in tRNA + guanine. It participates in tRNA modification; tRNA-queuosine biosynthesis. In terms of biological role, catalyzes the base-exchange of a guanine (G) residue with the queuine precursor 7-aminomethyl-7-deazaguanine (PreQ1) at position 34 (anticodon wobble position) in tRNAs with GU(N) anticodons (tRNA-Asp, -Asn, -His and -Tyr). Catalysis occurs through a double-displacement mechanism. The nucleophile active site attacks the C1' of nucleotide 34 to detach the guanine base from the RNA, forming a covalent enzyme-RNA intermediate. The proton acceptor active site deprotonates the incoming PreQ1, allowing a nucleophilic attack on the C1' of the ribose to form the product. After dissociation, two additional enzymatic reactions on the tRNA convert PreQ1 to queuine (Q), resulting in the hypermodified nucleoside queuosine (7-(((4,5-cis-dihydroxy-2-cyclopenten-1-yl)amino)methyl)-7-deazaguanosine). In Ruegeria pomeroyi (strain ATCC 700808 / DSM 15171 / DSS-3) (Silicibacter pomeroyi), this protein is Queuine tRNA-ribosyltransferase.